A 127-amino-acid polypeptide reads, in one-letter code: Holo-[acyl-carrier-protein] synthase (127 aa).

Residues Asp8 and Glu56 each contribute to the Mg(2+) site.

This sequence belongs to the P-Pant transferase superfamily. AcpS family. It depends on Mg(2+) as a cofactor.

It localises to the cytoplasm. It catalyses the reaction apo-[ACP] + CoA = holo-[ACP] + adenosine 3',5'-bisphosphate + H(+). Its function is as follows. Transfers the 4'-phosphopantetheine moiety from coenzyme A to a Ser of acyl-carrier-protein. This Caldanaerobacter subterraneus subsp. tengcongensis (strain DSM 15242 / JCM 11007 / NBRC 100824 / MB4) (Thermoanaerobacter tengcongensis) protein is Holo-[acyl-carrier-protein] synthase.